The chain runs to 180 residues: Zinc finger protein 740 (180 aa).

A compositionally biased stretch (polar residues) spans 1 to 11; the sequence is MMLSQIASKQA. A disordered region spans residues 1-62; that stretch reads MMLSQIASKQ…KEDDSLAEAS (62 aa). Lys-9 is covalently cross-linked (Glycyl lysine isopeptide (Lys-Gly) (interchain with G-Cter in SUMO2)). Ser-19 is modified (phosphoserine). The span at 31–56 shows a compositional bias: basic and acidic residues; that stretch reads CKPRFDLSSKGHRKDSDKSRNRKEDD. C2H2-type zinc fingers lie at residues 88-110 and 116-138; these read FICEHCFGAFRSSYHLKRHVLIH and FECDVCDMRFIQKYHLERHKRVH. Residues 144-166 form a C2H2-type 3; atypical zinc finger; sequence YQCERCHQCFSRTDRLLRHKRMC.

Belongs to the krueppel C2H2-type zinc-finger protein family.

The protein resides in the nucleus. Its function is as follows. May be involved in transcriptional regulation. This is Zinc finger protein 740 (Znf740) from Mus musculus (Mouse).